Here is a 161-residue protein sequence, read N- to C-terminus: Allophycocyanin beta subunit (161 aa).

Position 71 is an N4-methylasparagine (asparagine 71). Cysteine 81 is a binding site for (2R,3E)-phycocyanobilin.

The protein belongs to the phycobiliprotein family. In terms of assembly, heterodimer of an alpha and a beta chain. Contains one covalently linked phycocyanobilin chromophore. The chromophore is added by the phycocyanobilin lyase CpcUS.

It is found in the cellular thylakoid membrane. Light-harvesting photosynthetic bile pigment-protein from the phycobiliprotein complex. Allophycocyanin has a maximum absorption at approximately 650 nanometers. This Picosynechococcus sp. (strain ATCC 27264 / PCC 7002 / PR-6) (Agmenellum quadruplicatum) protein is Allophycocyanin beta subunit (apcB).